The sequence spans 314 residues: Acetyl-coenzyme A carboxylase carboxyl transferase subunit beta, chloroplastic (314 aa).

In terms of domain architecture, CoA carboxyltransferase N-terminal spans 47–314 (LWTRCDNCEN…APWKEKNNQV (268 aa)). Residues Cys-51, Cys-54, Cys-70, and Cys-73 each contribute to the Zn(2+) site. A C4-type zinc finger spans residues 51–73 (CDNCENMLYIKFLKQNKGVCEEC).

Belongs to the AccD/PCCB family. Acetyl-CoA carboxylase is a heterohexamer composed of biotin carboxyl carrier protein, biotin carboxylase and 2 subunits each of ACCase subunit alpha and ACCase plastid-coded subunit beta (accD). Zn(2+) serves as cofactor.

The protein resides in the plastid. Its subcellular location is the chloroplast stroma. It catalyses the reaction N(6)-carboxybiotinyl-L-lysyl-[protein] + acetyl-CoA = N(6)-biotinyl-L-lysyl-[protein] + malonyl-CoA. Its pathway is lipid metabolism; malonyl-CoA biosynthesis; malonyl-CoA from acetyl-CoA: step 1/1. Component of the acetyl coenzyme A carboxylase (ACC) complex. Biotin carboxylase (BC) catalyzes the carboxylation of biotin on its carrier protein (BCCP) and then the CO(2) group is transferred by the transcarboxylase to acetyl-CoA to form malonyl-CoA. The chain is Acetyl-coenzyme A carboxylase carboxyl transferase subunit beta, chloroplastic from Angiopteris lygodiifolia (Turnip fern).